The chain runs to 161 residues: 2-C-methyl-D-erythritol 2,4-cyclodiphosphate synthase (161 aa).

Positions 9 and 11 each coordinate a divalent metal cation. 4-CDP-2-C-methyl-D-erythritol 2-phosphate is bound by residues 9–11 (DFH) and 37–38 (HS). Histidine 45 lines the a divalent metal cation pocket. 4-CDP-2-C-methyl-D-erythritol 2-phosphate is bound by residues 59 to 61 (DIG), 64 to 68 (FPDTD), 135 to 138 (TTTE), and arginine 145.

Belongs to the IspF family. Homotrimer. The cofactor is a divalent metal cation.

The enzyme catalyses 4-CDP-2-C-methyl-D-erythritol 2-phosphate = 2-C-methyl-D-erythritol 2,4-cyclic diphosphate + CMP. It functions in the pathway isoprenoid biosynthesis; isopentenyl diphosphate biosynthesis via DXP pathway; isopentenyl diphosphate from 1-deoxy-D-xylulose 5-phosphate: step 4/6. Its function is as follows. Involved in the biosynthesis of isopentenyl diphosphate (IPP) and dimethylallyl diphosphate (DMAPP), two major building blocks of isoprenoid compounds. Catalyzes the conversion of 4-diphosphocytidyl-2-C-methyl-D-erythritol 2-phosphate (CDP-ME2P) to 2-C-methyl-D-erythritol 2,4-cyclodiphosphate (ME-CPP) with a corresponding release of cytidine 5-monophosphate (CMP). In Leptospira borgpetersenii serovar Hardjo-bovis (strain JB197), this protein is 2-C-methyl-D-erythritol 2,4-cyclodiphosphate synthase.